We begin with the raw amino-acid sequence, 210 residues long: Pyridoxine/pyridoxamine 5'-phosphate oxidase (210 aa).

Residues 7 to 10 (REDY) and Lys-65 each bind substrate. FMN contacts are provided by residues 60 to 65 (RVVLLK), 75 to 76 (FT), Arg-81, Lys-82, and Gln-104. Positions 122, 126, and 130 each coordinate substrate. Residues 139-140 (QS) and Trp-183 contribute to the FMN site. 189–191 (RLH) contacts substrate. Arg-193 serves as a coordination point for FMN.

The protein belongs to the pyridoxamine 5'-phosphate oxidase family. In terms of assembly, homodimer. The cofactor is FMN.

It catalyses the reaction pyridoxamine 5'-phosphate + O2 + H2O = pyridoxal 5'-phosphate + H2O2 + NH4(+). It carries out the reaction pyridoxine 5'-phosphate + O2 = pyridoxal 5'-phosphate + H2O2. It functions in the pathway cofactor metabolism; pyridoxal 5'-phosphate salvage; pyridoxal 5'-phosphate from pyridoxamine 5'-phosphate: step 1/1. Its pathway is cofactor metabolism; pyridoxal 5'-phosphate salvage; pyridoxal 5'-phosphate from pyridoxine 5'-phosphate: step 1/1. In terms of biological role, catalyzes the oxidation of either pyridoxine 5'-phosphate (PNP) or pyridoxamine 5'-phosphate (PMP) into pyridoxal 5'-phosphate (PLP). This chain is Pyridoxine/pyridoxamine 5'-phosphate oxidase, found in Actinobacillus succinogenes (strain ATCC 55618 / DSM 22257 / CCUG 43843 / 130Z).